The chain runs to 659 residues: MATKSCELVLCFFVFFVISFSAISVSAQTCDNTTGTFIPNSPYDKNRRLILSTLASNVTAQEGYFIGSIGIAPDQVFATGMCAPGSERDVCSLCIRSTSESLLQSCLDQADAFFWSGEETLCLVRYANRPFSGLLVMDPLGAIFNTGELNTNQTVFDIEWNNLTSSMIAGITSSSSGGNNSSKYYSDDIALVPDFKNISALMQCTPDVSSEDCNTCLRQNVVDYDNCCRGHQGGVMSRPNCFFRWEVYPFSGAIDQINLPKSPPPSVTSPSPIANITKNDSRISGGKIAAIVVVTVVTIILVVLGFVISNRRKQKQEMDLPTESVQFDLKTIESATSNFSERNKLGKGGFGEVYKGMLMNGTEIAVKRLSKTSGQGEVEFKNEVVVVAKLQHINLVRLLGFSLQGEEKLLVYEFVSNKSLDYFLFDPTKRNQLDWTMRRNIIGGITRGILYLHQDSRLKIIHRDLKASNILLDADMNPKIADFGMARIFGVDQTVANTGRVVGTFGYMSPEYVTHGQFSMKSDVYSFGVLILEIISGKKNSSFYQMDGLVNNLVTYVWKLWENKSLHELLDPFINQDFTSEEVIRYIHIGLLCVQENPADRPTMSTIHQMLTNSSITLPVPLPPGFFFRNGPGSNPGQSNSKSFACSVDEATITDVNPR.

A signal peptide spans 1–27 (MATKSCELVLCFFVFFVISFSAISVSA). Gnk2-homologous domains lie at 28-131 (QTCD…NRPF) and 137-250 (MDPL…VYPF). The Extracellular portion of the chain corresponds to 28–287 (QTCDNTTGTF…KNDSRISGGK (260 aa)). Residues N32, N57, N152, N162, N179, N180, N197, N275, and N279 are each glycosylated (N-linked (GlcNAc...) asparagine). Residues 288–308 (IAAIVVVTVVTIILVVLGFVI) traverse the membrane as a helical segment. Residues 309–659 (SNRRKQKQEM…EATITDVNPR (351 aa)) lie on the Cytoplasmic side of the membrane. The Protein kinase domain occupies 339–611 (FSERNKLGKG…PTMSTIHQML (273 aa)). ATP contacts are provided by residues 345–353 (LGKGGFGEV) and K367. Residue Y412 is modified to Phosphotyrosine. D464 serves as the catalytic Proton acceptor. Position 468 is a phosphoserine (S468). The residue at position 504 (T504) is a Phosphothreonine. Residue Y512 is modified to Phosphotyrosine.

It belongs to the protein kinase superfamily. Ser/Thr protein kinase family. CRK subfamily.

The protein localises to the membrane. It catalyses the reaction L-seryl-[protein] + ATP = O-phospho-L-seryl-[protein] + ADP + H(+). The catalysed reaction is L-threonyl-[protein] + ATP = O-phospho-L-threonyl-[protein] + ADP + H(+). The sequence is that of Cysteine-rich receptor-like protein kinase 18 (CRK18) from Arabidopsis thaliana (Mouse-ear cress).